A 359-amino-acid chain; its full sequence is Dihydroorotate dehydrogenase (quinone) (359 aa).

FMN contacts are provided by residues 68-72 and alanine 92; that span reads AGFDK. Position 72 (lysine 72) interacts with substrate. 117–121 is a substrate binding site; it reads NAYGF. FMN-binding residues include asparagine 146 and asparagine 179. Asparagine 179 contacts substrate. The Nucleophile role is filled by serine 182. Asparagine 184 lines the substrate pocket. FMN-binding residues include lysine 215 and threonine 243. Residue 244–245 participates in substrate binding; that stretch reads NT. FMN contacts are provided by residues glycine 263, glycine 292, and 313-314; that span reads YT.

Belongs to the dihydroorotate dehydrogenase family. Type 2 subfamily. As to quaternary structure, monomer. FMN is required as a cofactor.

It is found in the cell membrane. The enzyme catalyses (S)-dihydroorotate + a quinone = orotate + a quinol. The protein operates within pyrimidine metabolism; UMP biosynthesis via de novo pathway; orotate from (S)-dihydroorotate (quinone route): step 1/1. In terms of biological role, catalyzes the conversion of dihydroorotate to orotate with quinone as electron acceptor. In Nautilia profundicola (strain ATCC BAA-1463 / DSM 18972 / AmH), this protein is Dihydroorotate dehydrogenase (quinone).